The primary structure comprises 314 residues: Methionyl-tRNA formyltransferase (314 aa).

109–112 (SLLP) is a (6S)-5,6,7,8-tetrahydrofolate binding site.

It belongs to the Fmt family.

The catalysed reaction is L-methionyl-tRNA(fMet) + (6R)-10-formyltetrahydrofolate = N-formyl-L-methionyl-tRNA(fMet) + (6S)-5,6,7,8-tetrahydrofolate + H(+). Functionally, attaches a formyl group to the free amino group of methionyl-tRNA(fMet). The formyl group appears to play a dual role in the initiator identity of N-formylmethionyl-tRNA by promoting its recognition by IF2 and preventing the misappropriation of this tRNA by the elongation apparatus. The protein is Methionyl-tRNA formyltransferase of Alkaliphilus metalliredigens (strain QYMF).